The following is a 238-amino-acid chain: Tetraspanin-4 (238 aa).

At 1–13 (MARACLQAVKYLM) the chain is on the cytoplasmic side. Residues 14–34 (FAFNLLFWLGGCGVLGVGIWL) traverse the membrane as a helical segment. Residues 35-55 (AATQGSFATLSSSFPSLSAAN) are Extracellular-facing. The chain crosses the membrane as a helical span at residues 56–76 (LLIITGAFVMAIGFVGCLGAI). Residues 77 to 85 (KENKCLLLT) are Cytoplasmic-facing. The helical transmembrane segment at 86-106 (FFLLLLLVFLLEATIAILFFA) threads the bilayer. Over 107-201 (YTDKIDRYAQ…ETVKVWLQEN (95 aa)) the chain is Extracellular. Asn-152 and Asn-161 each carry an N-linked (GlcNAc...) asparagine glycan. Residues 202–222 (LLAVGIFGLCTALVQILGLTF) form a helical membrane-spanning segment. The Cytoplasmic portion of the chain corresponds to 223 to 238 (AMTMYCQVVKADTYCA).

Belongs to the tetraspanin (TM4SF) family. Forms a complex with integrins. Interacts with HRH4. Expressed in multiple tissues but is absent in brain, lymphoid cells, and platelets.

Its subcellular location is the cell membrane. In terms of biological role, structural component of specialized membrane microdomains known as tetraspanin-enriched microdomains (TERMs), which act as platforms for receptor clustering and signaling. Plays an essential role in migrasome formation and migration on retracting fibers at the rear end of migrating cells. Migrasomes are cellular organelles that form as large vesicle-like structures on retraction fibers of migrating cells. Mechanistically, acts as a membrane curvature sensor and participates in stabilizing the migrasome structure in a late stage of biogenesis. May also play a regulatory role for the histamine H4 receptor/HRH4 without affecting histamine binding to HRH4 or signaling. The chain is Tetraspanin-4 (TSPAN4) from Homo sapiens (Human).